Consider the following 218-residue polypeptide: Phosphoglycolate phosphatase (218 aa).

The Nucleophile role is filled by aspartate 7. 3 residues coordinate Mg(2+): aspartate 7, aspartate 9, and aspartate 167.

It belongs to the HAD-like hydrolase superfamily. CbbY/CbbZ/Gph/YieH family. The cofactor is Mg(2+).

The enzyme catalyses 2-phosphoglycolate + H2O = glycolate + phosphate. Its pathway is organic acid metabolism; glycolate biosynthesis; glycolate from 2-phosphoglycolate: step 1/1. Specifically catalyzes the dephosphorylation of 2-phosphoglycolate. Is involved in the dissimilation of the intracellular 2-phosphoglycolate formed during the DNA repair of 3'-phosphoglycolate ends, a major class of DNA lesions induced by oxidative stress. This Cereibacter sphaeroides (Rhodobacter sphaeroides) protein is Phosphoglycolate phosphatase.